Consider the following 1244-residue polypeptide: Alpha-protein kinase 1 (1244 aa).

Residues F61, Q67, R116, 150 to 153, D231, K233, 236 to 237, and F295 each bind ADP-D-glycero-beta-D-manno-heptose; these read RQAR and ST. Disordered stretches follow at residues 650-675, 701-737, 757-798, and 824-848; these read LQEP…TPFS, VRNM…THPS, VKDR…TEDA, and NWPV…DPDA. Polar residues predominate over residues 652–675; sequence EPNNDNLEPSQNQPQQQMPLTPFS. The span at 713–726 shows a compositional bias: low complexity; sequence SRPSYRSASWSSDS. Residues 757–771 are compositionally biased toward basic and acidic residues; sequence VKDRQGKEQGEEISE. The span at 787-798 shows a compositional bias: acidic residues; sequence PEGETAESTEDA. The 221-residue stretch at 1017–1237 folds into the Alpha-type protein kinase domain; that stretch reads KYSKKSELWT…ICHRLSLTRP (221 aa).

The protein belongs to the protein kinase superfamily. Alpha-type protein kinase family. ALPK subfamily. In terms of tissue distribution, highly expressed in liver. Expressed in the optic nerve and retinal pigmented epithelium. Lower expression is observed in the macula and extramacular retina.

The protein resides in the cytoplasm. It is found in the cytosol. The protein localises to the cytoskeleton. It localises to the spindle pole. Its subcellular location is the microtubule organizing center. The protein resides in the centrosome. It is found in the cell projection. The protein localises to the cilium. The catalysed reaction is L-seryl-[protein] + ATP = O-phospho-L-seryl-[protein] + ADP + H(+). It carries out the reaction L-threonyl-[protein] + ATP = O-phospho-L-threonyl-[protein] + ADP + H(+). With respect to regulation, serine/threonine-protein kinase activity is stimulated upon ADP-D-glycero-beta-D-manno-heptose (ADP-Heptose)-binding. Its function is as follows. Serine/threonine-protein kinase that detects bacterial pathogen-associated molecular pattern metabolites (PAMPs) and initiates an innate immune response, a critical step for pathogen elimination and engagement of adaptive immunity. Specifically recognizes and binds ADP-D-glycero-beta-D-manno-heptose (ADP-Heptose), a potent PAMP present in all Gram-negative and some Gram-positive bacteria. ADP-Heptose-binding stimulates its kinase activity to phosphorylate and activate TIFA, triggering pro-inflammatory NF-kappa-B signaling. May be involved in monosodium urate monohydrate (MSU)-induced inflammation by mediating phosphorylation of unconventional myosin MYO9A. May also play a role in apical protein transport by mediating phosphorylation of unconventional myosin MYO1A. May play a role in ciliogenesis. The polypeptide is Alpha-protein kinase 1 (Homo sapiens (Human)).